Here is a 596-residue protein sequence, read N- to C-terminus: MGSGASRLLTACTCSRPAPASVDAEPCLDDALGHSFCYAAAATATAHSSSFRHGISGAALSANSSVPVPLYNASAAAGGVAPGYSSAFHTSSSFSSAPLQLSNLSSGPLFLSGPIDRAGQLSGPLDPAVPFSGPLPAKPPKPASSSSRGFSRRFRKPSFGSLRRSVSEKNRPCAVPLRRDDGVQWAHGRAGEDRVHVVVSEDQRWLFVGIYDGFNGPEAPDFLVTNLYRFLLRELRGIFYKEADADNKKLWQFLVDGDDDDSELDFSGSGRFALSLDRLKESRFHMWAHAAADESGREWGSRRLAPAPAVRDHAAVLAALTRALASTEAAYLDMTDQSMGTHPELAVTGACLLVALVRDDNVYVMNLGDSRAIVAQRPDDGDDGCVFGTMRRMEDVGVGLEIETRPGGCAIIGLKPLQLSTDHSTSIEEEVHRIKREHPDDDQCIVNDRVKGRLKVTRAFGAGYLKQAKLNNGLLEMFRNDYIGDTPYISCTPSLCHHKLTARDQFLVLSSDGLYQYLSNEEVVLHVENFMERFPEGDPAQSLIEELLSRAAKKAGMDFYELLDIPQGDRRKYHDDVTVMVISLEGRIWKSSGTYV.

The tract at residues 122–154 (SGPLDPAVPFSGPLPAKPPKPASSSSRGFSRRF) is disordered. Positions 177–584 (LRRDDGVQWA…DDVTVMVISL (408 aa)) constitute a PPM-type phosphatase domain. The Mn(2+) site is built by Asp212, Gly213, Asp512, and Asp575.

The protein belongs to the PP2C family. Mg(2+) serves as cofactor. The cofactor is Mn(2+).

The enzyme catalyses O-phospho-L-seryl-[protein] + H2O = L-seryl-[protein] + phosphate. The catalysed reaction is O-phospho-L-threonyl-[protein] + H2O = L-threonyl-[protein] + phosphate. The protein is Probable protein phosphatase 2C 26 of Oryza sativa subsp. japonica (Rice).